The chain runs to 268 residues: Glucosamine-6-phosphate deaminase (268 aa).

D67 serves as the catalytic Proton acceptor; for enolization step. The For ring-opening step role is filled by N137. The Proton acceptor; for ring-opening step role is filled by H139. E144 serves as the catalytic For ring-opening step.

Belongs to the glucosamine/galactosamine-6-phosphate isomerase family. NagB subfamily. In terms of assembly, homohexamer.

The enzyme catalyses alpha-D-glucosamine 6-phosphate + H2O = beta-D-fructose 6-phosphate + NH4(+). It participates in amino-sugar metabolism; N-acetylneuraminate degradation; D-fructose 6-phosphate from N-acetylneuraminate: step 5/5. Its function is as follows. Catalyzes the reversible isomerization-deamination of glucosamine 6-phosphate (GlcN6P) to form fructose 6-phosphate (Fru6P) and ammonium ion. This chain is Glucosamine-6-phosphate deaminase, found in Pseudoalteromonas translucida (strain TAC 125).